We begin with the raw amino-acid sequence, 912 residues long: DNA ligase 4 (912 aa).

Positions 271, 272, 273, 274, 278, 331, 345, 367, 427, 432, 449, and 451 each coordinate ATP. Lys-273 functions as the N6-AMP-lysine intermediate in the catalytic mechanism. Glu-331 provides a ligand contact to Mg(2+). Position 427 (Glu-427) interacts with Mg(2+). Residues 610 to 620 (LATKHLHVGDD) are required for catalytic activity. BRCT domains are found at residues 654–743 (KVSN…PRFM) and 846–912 (LRFH…QYLL).

This sequence belongs to the ATP-dependent DNA ligase family. As to quaternary structure, interacts with XRCC4; the LIG4-XRCC4 subcomplex has a 1:2 stoichiometry and XRCC4 is required for LIG4 stability. Component of the core long-range non-homologous end joining (NHEJ) complex (also named DNA-PK complex) composed of PRKDC, LIG4, XRCC4, XRCC6/Ku70, XRCC5/Ku86 and NHEJ1/XLF. Additional component of the NHEJ complex includes PAXX. Following autophosphorylation, PRKDC dissociates from DNA, leading to formation of the short-range NHEJ complex, composed of LIG4, XRCC4, XRCC6/Ku70, XRCC5/Ku86 and NHEJ1/XLF. Interacts with DCLRE1C; the interaction is direct. Interacts with APLF. Mg(2+) serves as cofactor.

It localises to the nucleus. The enzyme catalyses ATP + (deoxyribonucleotide)n-3'-hydroxyl + 5'-phospho-(deoxyribonucleotide)m = (deoxyribonucleotide)n+m + AMP + diphosphate.. Functionally, DNA ligase involved in DNA non-homologous end joining (NHEJ); required for double-strand break (DSB) repair and V(D)J recombination. Catalyzes the NHEJ ligation step of the broken DNA during DSB repair by resealing the DNA breaks after the gap filling is completed. Joins single-strand breaks in a double-stranded polydeoxynucleotide in an ATP-dependent reaction. LIG4 is mechanistically flexible: it can ligate nicks as well as compatible DNA overhangs alone, while in the presence of XRCC4, it can ligate ends with 2-nucleotides (nt) microhomology and 1-nt gaps. Forms a subcomplex with XRCC4; the LIG4-XRCC4 subcomplex is responsible for the NHEJ ligation step and XRCC4 enhances the joining activity of LIG4. Binding of the LIG4-XRCC4 complex to DNA ends is dependent on the assembly of the DNA-dependent protein kinase complex DNA-PK to these DNA ends. LIG4 regulates nuclear localization of XRCC4. This chain is DNA ligase 4, found in Cricetulus griseus (Chinese hamster).